A 454-amino-acid polypeptide reads, in one-letter code: Caspase-9 (454 aa).

A CARD domain is found at 1–92 (MDEADRQLLR…GTLASLLQSG (92 aa)). T163 is modified (phosphothreonine; by MAPK1). Position 191 is a phosphotyrosine; by ABL1 (Y191). Active-site residues include H275 and C325. Phosphoserine occurs at positions 340 and 348. Positions 354-367 (AVPYQEGPRPLDQL) are excised as a propeptide.

Belongs to the peptidase C14A family. As to quaternary structure, heterotetramer that consists of two anti-parallel arranged heterodimers, each one formed by a 35 kDa (p35) and a 10 kDa (p10) subunit. Caspase-9 and APAF1 bind to each other via their respective NH2-terminal CED-3 homologous domains in the presence of cytochrome C and ATP. Interacts (inactive form) with EFHD2. Interacts with HAX1. Interacts with BIRC2/c-IAP1, XIAP/BIRC4, BIRC5/survivin, BIRC6/bruce and BIRC7/livin. Interacts with ABL1 (via SH3 domain); the interaction is direct and increased in the response of cells to genotoxic stress and ABL1/c-Abl activation. Interacts with BCL2L10. Post-translationally, cleavages at Asp-353 by granzyme B and at Asp-368 by caspase-3 generate the two active subunits. Caspase-8 and -10 can also be involved in these processing events. Phosphorylated at Thr-163 by MAPK1/ERK2. Phosphorylation at Thr-163 is sufficient to block caspase-9 processing and subsequent caspase-3 activation. Phosphorylation on Tyr-191 by ABL1/c-Abl; occurs in the response of cells to DNA damage. In terms of processing, ubiquitinated by BIRC6; this activity is inhibited by DIABLO/SMAC.

It carries out the reaction Strict requirement for an Asp residue at position P1 and with a marked preference for His at position P2. It has a preferred cleavage sequence of Leu-Gly-His-Asp-|-Xaa.. Its activity is regulated as follows. Inhibited by BIRC6; following inhibition of BIRC6-caspase binding by DIABLO/SMAC, BIRC6 is subjected to caspase cleavage, leading to an increase in active caspases. Involved in the activation cascade of caspases responsible for apoptosis execution. Binding of caspase-9 to Apaf-1 leads to activation of the protease which then cleaves and activates effector caspases caspase-3 (CASP3) or caspase-7 (CASP7). Promotes DNA damage-induced apoptosis in a ABL1/c-Abl-dependent manner. Proteolytically cleaves poly(ADP-ribose) polymerase (PARP). Cleaves BIRC6 following inhibition of BIRC6-caspase binding by DIABLO/SMAC. This chain is Caspase-9 (Casp9), found in Mus musculus (Mouse).